A 355-amino-acid chain; its full sequence is 3-dehydroquinate synthase (355 aa).

NAD(+) contacts are provided by residues 71–76, 105–109, 129–130, lysine 142, and lysine 151; these read EGEERK, GVVGD, and TS. Zn(2+)-binding residues include glutamate 184, histidine 246, and histidine 263.

It belongs to the sugar phosphate cyclases superfamily. Dehydroquinate synthase family. Co(2+) serves as cofactor. Zn(2+) is required as a cofactor. It depends on NAD(+) as a cofactor.

It is found in the cytoplasm. It catalyses the reaction 7-phospho-2-dehydro-3-deoxy-D-arabino-heptonate = 3-dehydroquinate + phosphate. It participates in metabolic intermediate biosynthesis; chorismate biosynthesis; chorismate from D-erythrose 4-phosphate and phosphoenolpyruvate: step 2/7. Catalyzes the conversion of 3-deoxy-D-arabino-heptulosonate 7-phosphate (DAHP) to dehydroquinate (DHQ). This chain is 3-dehydroquinate synthase, found in Streptococcus pneumoniae (strain 70585).